A 264-amino-acid polypeptide reads, in one-letter code: Catenin delta-2 (264 aa).

ARM repeat units lie at residues 20–59 (NKIKAEIRRQGGIQLLVDLLDHRMTEVHRSACGALRNLVY), 64–104 (DDNK…NLSS), 120–162 (LTNA…NVSS), and 166–211 (EARR…NLSY). Residues 238 to 264 (GKDAESSGCWGKKKKKKKSQDQWDGVG) form a disordered region.

Belongs to the beta-catenin family. In terms of assembly, binds to E-cadherin at a juxtamembrane site within the cytoplasmic domain. Binds to PSEN1. Interacts with ZBTB33. Interacts with ARHGEF28. Interacts (via the extreme C-terminus) with FRMPD2 (via the PDZ 2 domain). Interacts with PDZD2. Interacts with CDK5. Interacts with CTNBB1. Interacts with GSK3A and GSK3B. Interacts with DNM2. Interacts with CCDC85B. In terms of processing, O-glycosylated. Post-translationally, phosphorylated by CDK5. Phosphorylated by GSK3B. In terms of tissue distribution, predominantly expressed in brain; accumulates in cortical neurons (at protein level).

The protein localises to the nucleus. The protein resides in the cell junction. It localises to the adherens junction. It is found in the cell projection. Its subcellular location is the dendrite. The protein localises to the perikaryon. Functionally, has a critical role in neuronal development, particularly in the formation and/or maintenance of dendritic spines and synapses. Involved in the regulation of canonical Wnt signaling. It probably acts on beta-catenin turnover, facilitating beta-catenin interaction with GSK3B, phosphorylation, ubiquitination and degradation. May be involved in neuronal cell adhesion and tissue morphogenesis and integrity by regulating adhesion molecules. Functions as a transcriptional activator when bound to ZBTB33. The protein is Catenin delta-2 (Ctnnd2) of Rattus norvegicus (Rat).